The chain runs to 251 residues: Cytochrome P450 monooxygenase ppzG (251 aa).

Cys-250 contributes to the heme binding site.

It belongs to the cytochrome P450 family. It depends on heme as a cofactor.

Its pathway is secondary metabolite biosynthesis. Functionally, cytochrome P450 monooxygenase; part of the gene cluster that mediates the biosynthesis of pyrrolopyrazines, secondary metabolites showing insecticidal activity. The role of ppzG within the pathway has still to be determined. The single multifunctional NRPS ppzA is sufficient to produce peramine via condensation of 1-pyrroline-5-carboxylate and arginine, N-methylation of the alpha-amino group of arginine and reduction of the thioester and the cyclization to form an iminium ion resulting in release from the peptide synthetase. Deprotonation of this intermediate and oxidation of the pyrroline ring would give rise to peramine. In Epichloe species that produce only peramine, the peramine synthetase gene is not localized in a gene cluster, in contrast to Metarhizium species that contain additional pyrrolopyrazine biosynthesis genes. The 2-oxoglutarate-Fe(II) type oxidoreductase ppzC hydroxylates peramine to yield the newly identified compound 8-hydroxyperamine whereas ppzD converts L-proline into trans-4-hydroxy-L-proline, a precursor of peramine biosynthesis. The sequence is that of Cytochrome P450 monooxygenase ppzG from Metarhizium rileyi (strain RCEF 4871) (Nomuraea rileyi).